A 451-amino-acid chain; its full sequence is Endosomal transmembrane epsin interactor 1 (451 aa).

A signal peptide spans 1–29; the sequence is MILLVNLFVLLSVVCILLNLAGFILGCQG. The Lumenal segment spans residues 30–85; that stretch reads AQFVSSVPRCDLVDLGEGKICFCCEEFQPAKCTDKENALKLFPVQPCSAVHLLLKK. The helical transmembrane segment at 86–106 threads the bilayer; it reads VLFALCALNALTTTVCLVAAA. Residues 107–451 are Cytoplasmic-facing; that stretch reads LRYLQIFASR…LIGVIRETVL (345 aa). The interval 107–451 is mediates interaction with EPN1; that stretch reads LRYLQIFASR…LIGVIRETVL (345 aa). 2 consecutive short sequence motifs (PPxY; mediates interaction with ITCH) follow at residues 148 to 151 and 194 to 197; these read PPSY and PPPY. Residues 204 to 213 show a composition bias toward polar residues; sequence TDQEQESSFQ. Residues 204–224 form a disordered region; that stretch reads TDQEQESSFQMPEGPETAASP. Residue Lys274 forms a Glycyl lysine isopeptide (Lys-Gly) (interchain with G-Cter in ubiquitin) linkage. Ser275 is subject to Phosphoserine. A Glycyl lysine isopeptide (Lys-Gly) (interchain with G-Cter in ubiquitin) cross-link involves residue Lys365.

This sequence belongs to the ENTREP family. In terms of assembly, interacts with ITCH; enhances the ubiquitination of CXCR4 by ITCH and the subsequent endocytosis and desensitization of the receptor. Interacts with EPN1.

It localises to the early endosome membrane. It is found in the late endosome membrane. The protein resides in the recycling endosome membrane. The protein localises to the cell membrane. In terms of biological role, functions as an activator of the E3 ubiquitin protein ligase ITCH in the ubiquitination of the CXCL12-activated CXCR4 receptor. Thereby, triggers CXCR4 endocytosis and desensitization, negatively regulating the CXCL12/CXCR4 signaling pathway. The protein is Endosomal transmembrane epsin interactor 1 of Mus musculus (Mouse).